Here is a 435-residue protein sequence, read N- to C-terminus: Tol-Pal system protein TolB (435 aa).

Residues 1-20 (MRKIIAGVFIFVFLISNLYA) form the signal peptide.

The protein belongs to the TolB family. In terms of assembly, the Tol-Pal system is composed of five core proteins: the inner membrane proteins TolA, TolQ and TolR, the periplasmic protein TolB and the outer membrane protein Pal. They form a network linking the inner and outer membranes and the peptidoglycan layer.

It is found in the periplasm. Its function is as follows. Part of the Tol-Pal system, which plays a role in outer membrane invagination during cell division and is important for maintaining outer membrane integrity. In Francisella tularensis subsp. tularensis (strain WY96-3418), this protein is Tol-Pal system protein TolB.